Here is a 117-residue protein sequence, read N- to C-terminus: Tyrosine-protein phosphatase 25 (117 aa).

Residues 1-117 (WLMIIEQKCN…DLIGQSPIVV (117 aa)) form the Tyrosine-protein phosphatase domain. Residue D85 coordinates substrate.

The protein belongs to the protein-tyrosine phosphatase family.

It carries out the reaction O-phospho-L-tyrosyl-[protein] + H2O = L-tyrosyl-[protein] + phosphate. The polypeptide is Tyrosine-protein phosphatase 25 (STY-25) (Styela plicata (Wrinkled sea squirt)).